The following is a 300-amino-acid chain: Ribosomal protein L11 methyltransferase (300 aa).

S-adenosyl-L-methionine contacts are provided by threonine 152, glycine 173, aspartate 195, and asparagine 234.

This sequence belongs to the methyltransferase superfamily. PrmA family.

The protein resides in the cytoplasm. The enzyme catalyses L-lysyl-[protein] + 3 S-adenosyl-L-methionine = N(6),N(6),N(6)-trimethyl-L-lysyl-[protein] + 3 S-adenosyl-L-homocysteine + 3 H(+). In terms of biological role, methylates ribosomal protein L11. The sequence is that of Ribosomal protein L11 methyltransferase from Burkholderia ambifaria (strain MC40-6).